The chain runs to 261 residues: Small ribosomal subunit protein eS1 (261 aa).

The segment covering 1 to 18 (MAVGKNKRISKGKKGGKK) has biased composition (basic residues). A disordered region spans residues 1–23 (MAVGKNKRISKGKKGGKKKAADP).

This sequence belongs to the eukaryotic ribosomal protein eS1 family. As to quaternary structure, component of the small ribosomal subunit. Mature ribosomes consist of a small (40S) and a large (60S) subunit. The 40S subunit contains about 33 different proteins and 1 molecule of RNA (18S). The 60S subunit contains about 49 different proteins and 3 molecules of RNA (25S, 5.8S and 5S).

The protein resides in the cytoplasm. This is Small ribosomal subunit protein eS1 (cyc07) from Nicotiana tabacum (Common tobacco).